The sequence spans 410 residues: Serine hydroxymethyltransferase (410 aa).

(6S)-5,6,7,8-tetrahydrofolate contacts are provided by residues Leu-116 and 120–122 (GHL). Lys-225 is subject to N6-(pyridoxal phosphate)lysine. (6S)-5,6,7,8-tetrahydrofolate is bound at residue 349–351 (SPF).

It belongs to the SHMT family. Homodimer. The cofactor is pyridoxal 5'-phosphate.

Its subcellular location is the cytoplasm. The enzyme catalyses (6R)-5,10-methylene-5,6,7,8-tetrahydrofolate + glycine + H2O = (6S)-5,6,7,8-tetrahydrofolate + L-serine. It participates in one-carbon metabolism; tetrahydrofolate interconversion. Its pathway is amino-acid biosynthesis; glycine biosynthesis; glycine from L-serine: step 1/1. In terms of biological role, catalyzes the reversible interconversion of serine and glycine with tetrahydrofolate (THF) serving as the one-carbon carrier. This reaction serves as the major source of one-carbon groups required for the biosynthesis of purines, thymidylate, methionine, and other important biomolecules. Also exhibits THF-independent aldolase activity toward beta-hydroxyamino acids, producing glycine and aldehydes, via a retro-aldol mechanism. In Leuconostoc citreum (strain KM20), this protein is Serine hydroxymethyltransferase.